The primary structure comprises 1604 residues: Putative surface cell antigen sca2 (1604 aa).

The first 33 residues, methionine 1–alanine 33, serve as a signal peptide directing secretion. 3 disordered regions span residues threonine 324–proline 354, asparagine 554–asparagine 603, and glutamine 1183–leucine 1240. Residues asparagine 554–asparagine 564 are compositionally biased toward low complexity. Positions isoleucine 568–leucine 587 are enriched in pro residues. Composition is skewed to basic and acidic residues over residues serine 1193–serine 1213 and serine 1227–leucine 1240. An Autotransporter domain is found at glutamate 1325–leucine 1604.

Its subcellular location is the cell outer membrane. This is Putative surface cell antigen sca2 (sca2) from Rickettsia felis (strain ATCC VR-1525 / URRWXCal2) (Rickettsia azadi).